The primary structure comprises 476 residues: Argininosuccinate lyase (476 aa).

The protein belongs to the lyase 1 family. Argininosuccinate lyase subfamily.

It localises to the cytoplasm. It catalyses the reaction 2-(N(omega)-L-arginino)succinate = fumarate + L-arginine. Its pathway is amino-acid biosynthesis; L-arginine biosynthesis; L-arginine from L-ornithine and carbamoyl phosphate: step 3/3. In Leptothrix cholodnii (strain ATCC 51168 / LMG 8142 / SP-6) (Leptothrix discophora (strain SP-6)), this protein is Argininosuccinate lyase.